Reading from the N-terminus, the 451-residue chain is Serine--tRNA ligase, cytoplasmic (451 aa).

Position 236–238 (236–238 (TSE)) interacts with L-serine. ATP contacts are provided by residues 267-269 (RKE) and Val283. Residue Glu290 coordinates L-serine. 354 to 357 (ELVS) is a binding site for ATP. Thr392 is an L-serine binding site.

The protein belongs to the class-II aminoacyl-tRNA synthetase family. Type-1 seryl-tRNA synthetase subfamily. Homodimer. The tRNA molecule binds across the dimer.

The protein resides in the cytoplasm. The catalysed reaction is tRNA(Ser) + L-serine + ATP = L-seryl-tRNA(Ser) + AMP + diphosphate + H(+). It carries out the reaction tRNA(Sec) + L-serine + ATP = L-seryl-tRNA(Sec) + AMP + diphosphate + H(+). It participates in aminoacyl-tRNA biosynthesis; selenocysteinyl-tRNA(Sec) biosynthesis; L-seryl-tRNA(Sec) from L-serine and tRNA(Sec): step 1/1. Its function is as follows. Catalyzes the attachment of serine to tRNA(Ser). Is also able to aminoacylate tRNA(Sec) with serine, to form the misacylated tRNA L-seryl-tRNA(Sec), which will be further converted into selenocysteinyl-tRNA(Sec). This is Serine--tRNA ligase, cytoplasmic (serS) from Dictyostelium discoideum (Social amoeba).